The primary structure comprises 590 residues: MLRIAQTLEAQLRAAMQQAFPEADGELNPALGPASKPEFGDFQANGALALAKPLKQAPRQIAAAIVEQLQNNPEFSALAEAPQIAGPGFINITLKPSVLAAEVRQRIGDPRLGVAAVEQAEAPVIVDFSSPNIAKEMHVGHLRSTIIGDCLARVLEFRGHQVLRLNHVGDWGTQFGMLITHLKQVAPEALNTADAIDLGDLVAFYREAKKRFDDDEAFQTTSREEVVKLQGGDATSLKAWGLLCDQSRREFQKIYDRLDIRLNERGESFYNPQLAAVVDDLRSSGLLVTDEGAGCVFLEGVVGKEGKPLPLIVQKSDGGFNYATTDLAAIRYRLGSAGDGAGRVIYVTDAGQAAHFAGVFQVAKRAGWVPAAASLEHVPFGLVQGDDGKKLKTRAGDTVRLKDLLDEAVERAQADLRRRLEEEERQESESFIDQVATTVGLAAVKYADLSTNRITNYQFSFERMLALTGNTAPYLLYAVVRISGIARKGGALDGELPERLVFEEPQEWALIRQLLQLDAVISEVESDLLPNRLCTYLFELSQSFNRFYDQVPVLKADEPMRSSRLALCRLAADTLKLGLSLLGIPSLERM.

The short motif at 131–141 (PNIAKEMHVGH) is the 'HIGH' region element.

It belongs to the class-I aminoacyl-tRNA synthetase family. As to quaternary structure, monomer.

It is found in the cytoplasm. It carries out the reaction tRNA(Arg) + L-arginine + ATP = L-arginyl-tRNA(Arg) + AMP + diphosphate. This chain is Arginine--tRNA ligase, found in Synechococcus sp. (strain RCC307).